A 150-amino-acid chain; its full sequence is Ribosome maturation factor RimP (150 aa).

Belongs to the RimP family.

Its subcellular location is the cytoplasm. In terms of biological role, required for maturation of 30S ribosomal subunits. In Klebsiella pneumoniae (strain 342), this protein is Ribosome maturation factor RimP.